A 302-amino-acid chain; its full sequence is Phospho-N-acetylmuramoyl-pentapeptide-transferase (302 aa).

A run of 10 helical transmembrane segments spans residues methionine 1–arginine 21, glycine 42–serine 62, methionine 67–valine 87, leucine 95–isoleucine 115, phenylalanine 123–valine 143, glycine 154–leucine 174, glycine 178–asparagine 198, isoleucine 204–leucine 224, phenylalanine 229–valine 249, and isoleucine 279–glycine 299.

The protein belongs to the glycosyltransferase 4 family. MraY subfamily. It depends on Mg(2+) as a cofactor.

The protein resides in the cell inner membrane. The catalysed reaction is UDP-N-acetyl-alpha-D-muramoyl-L-alanyl-gamma-D-glutamyl-meso-2,6-diaminopimeloyl-D-alanyl-D-alanine + di-trans,octa-cis-undecaprenyl phosphate = di-trans,octa-cis-undecaprenyl diphospho-N-acetyl-alpha-D-muramoyl-L-alanyl-D-glutamyl-meso-2,6-diaminopimeloyl-D-alanyl-D-alanine + UMP. The protein operates within cell wall biogenesis; peptidoglycan biosynthesis. Its function is as follows. Catalyzes the initial step of the lipid cycle reactions in the biosynthesis of the cell wall peptidoglycan: transfers peptidoglycan precursor phospho-MurNAc-pentapeptide from UDP-MurNAc-pentapeptide onto the lipid carrier undecaprenyl phosphate, yielding undecaprenyl-pyrophosphoryl-MurNAc-pentapeptide, known as lipid I. The chain is Phospho-N-acetylmuramoyl-pentapeptide-transferase from Thermotoga maritima (strain ATCC 43589 / DSM 3109 / JCM 10099 / NBRC 100826 / MSB8).